We begin with the raw amino-acid sequence, 266 residues long: Undecaprenyl-diphosphatase (266 aa).

The next 8 membrane-spanning stretches (helical) occupy residues 1-21, 39-59, 87-107, 114-134, 144-164, 184-204, 218-238, and 246-266; these read MDIFQVIVLALIQGLTEFLPI, QGLTFDVAVNTGSLLAVVIYF, WWIILATIPAVIFGFTAKDFI, IEVIATTTIVFGLLLWWADKL, VGWKKALLIGFAQAMALIPGT, AARFSFLMSVPVSLGAAILVV, ALVLGTALSFVAAYLCIHYFL, and MTPFVIYRLALGAILCVVIFA.

This sequence belongs to the UppP family.

The protein localises to the cell inner membrane. The catalysed reaction is di-trans,octa-cis-undecaprenyl diphosphate + H2O = di-trans,octa-cis-undecaprenyl phosphate + phosphate + H(+). In terms of biological role, catalyzes the dephosphorylation of undecaprenyl diphosphate (UPP). Confers resistance to bacitracin. The protein is Undecaprenyl-diphosphatase of Shewanella loihica (strain ATCC BAA-1088 / PV-4).